A 40-amino-acid polypeptide reads, in one-letter code: Dolichyl-diphosphooligosaccharide--protein glycosyltransferase subunit 4 (40 aa).

The Lumenal portion of the chain corresponds to 1-7; that stretch reads MITDMQL. Residues 8–28 form a helical membrane-spanning segment; that stretch reads AIFSNVLGVFLFLLVVAYHYI. Residues 29 to 40 lie on the Cytoplasmic side of the membrane; that stretch reads NANTGKPSAKAK.

This sequence belongs to the OST4 family. In terms of assembly, component of the oligosaccharyltransferase (OST) complex.

It is found in the endoplasmic reticulum membrane. Subunit of the oligosaccharyl transferase (OST) complex that catalyzes the initial transfer of a defined glycan (Glc(3)Man(9)GlcNAc(2) in eukaryotes) from the lipid carrier dolichol-pyrophosphate to an asparagine residue within an Asn-X-Ser/Thr consensus motif in nascent polypeptide chains, the first step in protein N-glycosylation. N-glycosylation occurs cotranslationally and the complex associates with the Sec61 complex at the channel-forming translocon complex that mediates protein translocation across the endoplasmic reticulum (ER). All subunits are required for a maximal enzyme activity. This chain is Dolichyl-diphosphooligosaccharide--protein glycosyltransferase subunit 4, found in Drosophila sechellia (Fruit fly).